The primary structure comprises 157 residues: Small ribosomal subunit protein uS7 (157 aa).

This sequence belongs to the universal ribosomal protein uS7 family. Part of the 30S ribosomal subunit. Contacts proteins S9 and S11.

One of the primary rRNA binding proteins, it binds directly to 16S rRNA where it nucleates assembly of the head domain of the 30S subunit. Is located at the subunit interface close to the decoding center, probably blocks exit of the E-site tRNA. The protein is Small ribosomal subunit protein uS7 of Chlamydia muridarum (strain MoPn / Nigg).